A 115-amino-acid polypeptide reads, in one-letter code: U3-lycotoxin-Ls1a (115 aa).

A signal peptide spans M1 to A20. Positions E21–R44 are excised as a propeptide. 4 disulfide bridges follow: C48/C63, C55/C72, C62/C87, and C74/C85.

Belongs to the neurotoxin 19 (CSTX) family. 01 subfamily. Expressed by the venom gland.

The protein localises to the secreted. In Lycosa singoriensis (Wolf spider), this protein is U3-lycotoxin-Ls1a.